The chain runs to 139 residues: Serpin-like protein HMSD (139 aa).

An N-terminal signal peptide occupies residues 1-20; it reads MSISSALAMVFMGAKGNTAA. The N-linked (GlcNAc...) asparagine glycan is linked to N50.

This sequence belongs to the serpin family. In terms of tissue distribution, highly expressed in dendritic cells and primary leukemia cells, especially those of myeloid lineage.

It is found in the secreted. Functionally, putative serine protease inhibitor. The polypeptide is Serpin-like protein HMSD (HMSD) (Homo sapiens (Human)).